The chain runs to 528 residues: Probable feruloyl esterase B-1 (528 aa).

A signal peptide spans 1 to 19 (MMWWFLLIGLASAAATASS). Intrachain disulfides connect C29–C78, C64–C117, C190–C445, C259–C276, C285–C295, and C505–C527. N83 and N101 each carry an N-linked (GlcNAc...) asparagine glycan. Residue S191 is the Acyl-ester intermediate of the active site. Ca(2+) contacts are provided by D260, D263, A265, D267, and I269. N-linked (GlcNAc...) asparagine glycosylation is found at N286, N354, and N385. Catalysis depends on charge relay system residues D404 and H444.

This sequence belongs to the tannase family.

It localises to the secreted. It carries out the reaction feruloyl-polysaccharide + H2O = ferulate + polysaccharide.. Involved in degradation of plant cell walls. Hydrolyzes the feruloyl-arabinose ester bond in arabinoxylans as well as the feruloyl-galactose and feruloyl-arabinose ester bonds in pectin. This Aspergillus fumigatus (strain CBS 144.89 / FGSC A1163 / CEA10) (Neosartorya fumigata) protein is Probable feruloyl esterase B-1 (faeB-1).